We begin with the raw amino-acid sequence, 708 residues long: Outer capsid protein mu-1 (708 aa).

The N-myristoyl glycine; by host moiety is linked to residue Gly-2. N-linked (GlcNAc...) asparagine; by host glycans are attached at residues Asn-3, Asn-12, Asn-81, Asn-110, Asn-458, Asn-482, Asn-528, and Asn-659. The disordered stretch occupies residues 675–708 (PKPDCPTSGDSGESSNRRVKRDSYAGVVKRGYTR).

This sequence belongs to the orthoreovirus mu-1 protein family. As to quaternary structure, heterohexamer of three sigma-3 and three Mu-1 proteins. In terms of processing, cleaved during the endosomal proteolytic disassembly of the outer capsid. Mu-1 is proteolytically cleaved into mu-1N and mu-1C during the maturation step to generate the ISVP. Cleavage of mu-1 to mu-1C is dependent on myristoylation and binding to sigma-3 protein. Mu-1C is further cleaved into delta (59 kDa), and phi (13 kDa) segments during entry into the host cell cytoplasm. Mu-1 and mu-1N are N-terminally myristoylated. This acylation is essential for the membrane fusion activity.

The protein resides in the virion. Its subcellular location is the host cell membrane. It is found in the host endoplasmic reticulum. The protein localises to the host mitochondrion. Its function is as follows. Major outer capsid protein involved in host cell membrane penetration. In the endocytic compartment, outer-capsid protein sigma-3 is removed by cathepsin proteases, which exposes the viral membrane-penetration protein mu-1. Both myristoylated peptides mu-1N and phi are released during infectious subvirion particles (ISVP) formation in the endosome. They associate with host membranes and mu-1N induces permeabilization and delivery of transcriptionally active viral particles into the host cell cytoplasm. Seems to induce apoptosis in the host cell. The viral outer shell polypeptides, of which mu-1 is one, impose structural constraints that prevent elongation of nascent transcripts by the RNA-dependent RNA polymerase lambda-3. The polypeptide is Outer capsid protein mu-1 (M2) (Mammalia (T3D)).